The primary structure comprises 331 residues: UPF0194 membrane protein YbhG (331 aa).

Residues 1-19 (MKKPVVIGLAIAAIVAVIA) form the signal peptide. The stretch at 107 to 208 (EEIAQAAAAV…LDLQDTTLIA (102 aa)) forms a coiled coil.

It belongs to the UPF0194 family.

Its subcellular location is the periplasm. The polypeptide is UPF0194 membrane protein YbhG (Salmonella heidelberg (strain SL476)).